Reading from the N-terminus, the 315-residue chain is Methionyl-tRNA formyltransferase (315 aa).

113 to 116 contributes to the (6S)-5,6,7,8-tetrahydrofolate binding site; it reads SLLP.

This sequence belongs to the Fmt family.

The catalysed reaction is L-methionyl-tRNA(fMet) + (6R)-10-formyltetrahydrofolate = N-formyl-L-methionyl-tRNA(fMet) + (6S)-5,6,7,8-tetrahydrofolate + H(+). In terms of biological role, attaches a formyl group to the free amino group of methionyl-tRNA(fMet). The formyl group appears to play a dual role in the initiator identity of N-formylmethionyl-tRNA by promoting its recognition by IF2 and preventing the misappropriation of this tRNA by the elongation apparatus. The chain is Methionyl-tRNA formyltransferase from Escherichia coli O6:K15:H31 (strain 536 / UPEC).